Consider the following 1369-residue polypeptide: DNA-directed RNA polymerase subunit beta' (1369 aa).

Residues 1–43 (MTSSSPKTRKSSTKSKAKRGSKSKKAAEIKAVQRLSKTPPPFR) are disordered. Positions 7-24 (KTRKSSTKSKAKRGSKSK) are enriched in basic residues. 4 residues coordinate Zn(2+): C253, C320, C327, and C330. Residues 1294 to 1369 (TVDMPSSPVA…LQEEGLLSDE (76 aa)) are disordered. A compositionally biased stretch (acidic residues) spans 1342-1351 (DDELSAEDQM). A compositionally biased stretch (low complexity) spans 1357 to 1369 (LEGLQEEGLLSDE).

Belongs to the RNA polymerase beta' chain family. RpoC2 subfamily. In terms of assembly, in cyanobacteria the RNAP catalytic core is composed of 2 alpha, 1 beta, 1 beta', 1 gamma and 1 omega subunit. When a sigma factor is associated with the core the holoenzyme is formed, which can initiate transcription. Requires Zn(2+) as cofactor.

It catalyses the reaction RNA(n) + a ribonucleoside 5'-triphosphate = RNA(n+1) + diphosphate. Functionally, DNA-dependent RNA polymerase catalyzes the transcription of DNA into RNA using the four ribonucleoside triphosphates as substrates. This chain is DNA-directed RNA polymerase subunit beta', found in Prochlorococcus marinus (strain NATL1A).